The following is a 468-amino-acid chain: ATP synthase subunit beta (468 aa).

153–160 is an ATP binding site; that stretch reads GGAGVGKT.

Belongs to the ATPase alpha/beta chains family. As to quaternary structure, F-type ATPases have 2 components, CF(1) - the catalytic core - and CF(0) - the membrane proton channel. CF(1) has five subunits: alpha(3), beta(3), gamma(1), delta(1), epsilon(1). CF(0) has three main subunits: a(1), b(2) and c(9-12). The alpha and beta chains form an alternating ring which encloses part of the gamma chain. CF(1) is attached to CF(0) by a central stalk formed by the gamma and epsilon chains, while a peripheral stalk is formed by the delta and b chains.

The protein resides in the cell membrane. The catalysed reaction is ATP + H2O + 4 H(+)(in) = ADP + phosphate + 5 H(+)(out). In terms of biological role, produces ATP from ADP in the presence of a proton gradient across the membrane. The catalytic sites are hosted primarily by the beta subunits. This chain is ATP synthase subunit beta, found in Ligilactobacillus salivarius (strain UCC118) (Lactobacillus salivarius).